Here is a 158-residue protein sequence, read N- to C-terminus: Endoribonuclease YbeY (158 aa).

Residues H119, H123, and D129 each coordinate Zn(2+).

It belongs to the endoribonuclease YbeY family. The cofactor is Zn(2+).

It is found in the cytoplasm. In terms of biological role, single strand-specific metallo-endoribonuclease involved in late-stage 70S ribosome quality control and in maturation of the 3' terminus of the 16S rRNA. This Chlamydia pneumoniae (Chlamydophila pneumoniae) protein is Endoribonuclease YbeY.